Consider the following 24-residue polypeptide: Coenzyme PQQ synthesis protein A (24 aa).

A cross-link (pyrroloquinoline quinone (Glu-Tyr)) is located at residues 16–20 (EITMY).

It belongs to the PqqA family.

It participates in cofactor biosynthesis; pyrroloquinoline quinone biosynthesis. Functionally, required for coenzyme pyrroloquinoline quinone (PQQ) biosynthesis. PQQ is probably formed by cross-linking a specific glutamate to a specific tyrosine residue and excising these residues from the peptide. This chain is Coenzyme PQQ synthesis protein A, found in Burkholderia cenocepacia (strain ATCC BAA-245 / DSM 16553 / LMG 16656 / NCTC 13227 / J2315 / CF5610) (Burkholderia cepacia (strain J2315)).